The primary structure comprises 446 residues: MSTFIGQLFGFAVIVYLVWRFIVPLVGRLMSARQDTVRQQLADAAAAADRLAEASQAHTKALEDAKSEAHRVVEEARTDAERIAEQLEAQADVEAERIKMQGARQVDLIRAQLTRQLRLELGHESVRQARELVRNHVADQAQQSATVDRFLDQLDAMAPATADVDYPLLAKMRSASRRALTSLVDWFGTMAQDLDHQGLTTLAGELVSVARLLDREAVVTRYLTVPAEDATPRIRLIERLVSGKVGAPTLEVLRTAVSKRWSANSDLIDAIEHVSRQALLELAERAGQVDEVEDQLFRFSRILDVQPRLAILLGDCAVPAEGRVRLLRKVLERADSTVNPVVVALLSHTVELLRGQAVEEAVLFLAEVAVARRGEIVAQVGAAAELSDAQRTRLTEVLSRIYGHPVTVQLHIDAALLGGLSIAVGDEVIDGTLSSRLAAAEARLPD.

The segment at 1–168 (MSTFIGQLFG…PATADVDYPL (168 aa)) is ATP synthase subunit b. A helical membrane pass occupies residues 4-24 (FIGQLFGFAVIVYLVWRFIVP). Residues 169 to 446 (LAKMRSASRR…LAAAEARLPD (278 aa)) are ATP synthase subunit delta.

This sequence in the N-terminal section; belongs to the ATPase B chain family. In the C-terminal section; belongs to the ATPase delta chain family. F-type ATPases have 2 components, F(1) - the catalytic core - and F(0) - the membrane proton channel. F(1) has five subunits: alpha(3), beta(3), gamma(1), delta(1), epsilon(1). F(0) has three main subunits: a(1), b(2) and c(10-14). The alpha and beta chains form an alternating ring which encloses part of the gamma chain. F(1) is attached to F(0) by a central stalk formed by the gamma and epsilon chains, while a peripheral stalk is formed by the delta and b chains.

It localises to the cell membrane. Its function is as follows. F(1)F(0) ATP synthase produces ATP from ADP in the presence of a proton or sodium gradient. F-type ATPases consist of two structural domains, F(1) containing the extramembraneous catalytic core and F(0) containing the membrane proton channel, linked together by a central stalk and a peripheral stalk. During catalysis, ATP synthesis in the catalytic domain of F(1) is coupled via a rotary mechanism of the central stalk subunits to proton translocation. In terms of biological role, this fusion protein includes a component of the F(0) channel (subunit b) and of the F(1) subunit (subunit delta). Two copies of subunit b and one of delta together form the peripheral 'stator' stalk which links F(1) to F(0). The chain is ATP synthase subunit b-delta (atpFH) from Mycobacterium bovis (strain ATCC BAA-935 / AF2122/97).